Consider the following 124-residue polypeptide: Small ribosomal subunit protein uS12 (124 aa).

Aspartate 89 is subject to 3-methylthioaspartic acid.

It belongs to the universal ribosomal protein uS12 family. Part of the 30S ribosomal subunit. Contacts proteins S8 and S17. May interact with IF1 in the 30S initiation complex.

In terms of biological role, with S4 and S5 plays an important role in translational accuracy. Interacts with and stabilizes bases of the 16S rRNA that are involved in tRNA selection in the A site and with the mRNA backbone. Located at the interface of the 30S and 50S subunits, it traverses the body of the 30S subunit contacting proteins on the other side and probably holding the rRNA structure together. The combined cluster of proteins S8, S12 and S17 appears to hold together the shoulder and platform of the 30S subunit. The chain is Small ribosomal subunit protein uS12 from Blochmanniella floridana.